The chain runs to 370 residues: WAT1-related protein At1g44800 (370 aa).

Helical transmembrane passes span 11–31 (PILAIISLQFGYAGMYIITMV), 41–61 (VLATYRHVVATVVMAPFALMF), 67–87 (PKMTLAIFWRLLALGILEPLM), 102–122 (SYTSAFTNALPAVTFILALIF), 142–162 (VITVGGAMIMTLYKGPAIEIV), 182–202 (WVLGTIAIMGSISTWAAFFIL), 216–236 (LVTLICGIGTILNAIASLIMV), 252–272 (AAVYSGVVCSGIAYYIQSIVI), 278–298 (VFTTSFSPMCMIITAFLGALV), and 303–323 (IHLGSIIGAVFIVLGLYSVVW). 2 consecutive EamA domains span residues 23–143 (AGMY…GTVI) and 195–322 (TWAA…YSVV).

Belongs to the drug/metabolite transporter (DMT) superfamily. Plant drug/metabolite exporter (P-DME) (TC 2.A.7.4) family.

It localises to the membrane. This chain is WAT1-related protein At1g44800, found in Arabidopsis thaliana (Mouse-ear cress).